The sequence spans 301 residues: Probable alpha-L-glutamate ligase (301 aa).

One can recognise an ATP-grasp domain in the interval 104 to 287; the sequence is HQLLAAQGID…VAIKIVHHVE (184 aa). Residues K141, 178–179, D187, and 211–213 contribute to the ATP site; these read EF and RSN. Mg(2+) is bound by residues D248, E260, and N262. Mn(2+)-binding residues include D248, E260, and N262.

Belongs to the RimK family. The cofactor is Mg(2+). It depends on Mn(2+) as a cofactor.

The sequence is that of Probable alpha-L-glutamate ligase from Xylella fastidiosa (strain M12).